A 414-amino-acid chain; its full sequence is MQRDDGFVYCYGNLYSLLLYWGLVTIRVRSPDRGGAFSNRWTVCYALFTRSFMVICFMATVMTKLRDPEMSAAMFGHLSPLVKAIFTWECLSCSVTYIEYCLSLDLQKDRHLKLVARMQEFDRSVLMVFPHVQWNYRRARLKYWYGTVIVGFCFFSFSISLIFDTTRCTCGIPSTLLMAFTYTLLTSSVGLLGFVHIGIMDFIRVRLRLVQQLLHQLYQADDSSEVHERIAYLFEMSKRCSFLLAELNGVFGFAAAAGIFYDFTIMTCFVYVICQKLLEREPWDPEYVYMLLHVAIHTYKVVITSTYGYLLLREKRNCMHLLSQYSRYFSGQDVARRKTEDFQHWRMHNRQAAMVGSTTLLSVSTIYLVYNGMANYVIILVQLLFQQQQIKDHQLTSGKDVDIVGPMGPITHMD.

The Cytoplasmic segment spans residues 1–5 (MQRDD). Residues 6 to 26 (GFVYCYGNLYSLLLYWGLVTI) form a helical membrane-spanning segment. Residues 27-40 (RVRSPDRGGAFSNR) lie on the Extracellular side of the membrane. Residues 41–61 (WTVCYALFTRSFMVICFMATV) form a helical membrane-spanning segment. Over 62 to 142 (MTKLRDPEMS…QWNYRRARLK (81 aa)) the chain is Cytoplasmic. A helical transmembrane segment spans residues 143 to 163 (YWYGTVIVGFCFFSFSISLIF). Over 164–182 (DTTRCTCGIPSTLLMAFTY) the chain is Extracellular. Residues 183–203 (TLLTSSVGLLGFVHIGIMDFI) form a helical membrane-spanning segment. The Cytoplasmic portion of the chain corresponds to 204–249 (RVRLRLVQQLLHQLYQADDSSEVHERIAYLFEMSKRCSFLLAELNG). Residues 250–270 (VFGFAAAAGIFYDFTIMTCFV) traverse the membrane as a helical segment. Over 271-291 (YVICQKLLEREPWDPEYVYML) the chain is Extracellular. Residues 292–312 (LHVAIHTYKVVITSTYGYLLL) traverse the membrane as a helical segment. Over 313–364 (REKRNCMHLLSQYSRYFSGQDVARRKTEDFQHWRMHNRQAAMVGSTTLLSVS) the chain is Cytoplasmic. Residues 365-385 (TIYLVYNGMANYVIILVQLLF) traverse the membrane as a helical segment. The Extracellular segment spans residues 386-414 (QQQQIKDHQLTSGKDVDIVGPMGPITHMD).

Belongs to the insect chemoreceptor superfamily. Gustatory receptor (GR) family. Gr57a subfamily. As to expression, expressed in neurons of the terminal external chemosensory organ of larvae.

Its subcellular location is the cell membrane. Probable gustatory receptor which mediates acceptance or avoidance behavior, depending on its substrates. This chain is Putative gustatory receptor 47b (Gr47b), found in Drosophila melanogaster (Fruit fly).